Here is a 258-residue protein sequence, read N- to C-terminus: Putative cysteine-rich repeat secretory protein 16 (258 aa).

The N-terminal stretch at 1 to 30 is a signal peptide; the sequence is MYYSSPTCFVLITIFAVVVTQLIFMRTVSS. 2 Gnk2-homologous domains span residues 37–139 and 144–247; these read YLNH…PFDT and DKDN…LYPF.

This sequence belongs to the cysteine-rich repeat secretory protein family.

It localises to the secreted. The chain is Putative cysteine-rich repeat secretory protein 16 (CRRSP16) from Arabidopsis thaliana (Mouse-ear cress).